Consider the following 74-residue polypeptide: Translation initiation factor IF-1 (74 aa).

The region spanning 1–72 is the S1-like domain; sequence MAKQDAIEME…TKGRITYRLR (72 aa).

Belongs to the IF-1 family. Component of the 30S ribosomal translation pre-initiation complex which assembles on the 30S ribosome in the order IF-2 and IF-3, IF-1 and N-formylmethionyl-tRNA(fMet); mRNA recruitment can occur at any time during PIC assembly.

It is found in the cytoplasm. One of the essential components for the initiation of protein synthesis. Stabilizes the binding of IF-2 and IF-3 on the 30S subunit to which N-formylmethionyl-tRNA(fMet) subsequently binds. Helps modulate mRNA selection, yielding the 30S pre-initiation complex (PIC). Upon addition of the 50S ribosomal subunit IF-1, IF-2 and IF-3 are released leaving the mature 70S translation initiation complex. The sequence is that of Translation initiation factor IF-1 from Acaryochloris marina (strain MBIC 11017).